Here is a 372-residue protein sequence, read N- to C-terminus: MSYYQIIVCILASISYIILLEVIALDLGVLDNIFIPKRFAASTDVAIQLPDRNVTLWSRQAVFGKHFTNASATTVINLYLPSNFQEDMSGCPNRNDTDASYFYENDIIDYDIEYIEQKSYSSKPSARVQKDDGGESKDEAILDFLLVQRGKCTYFDKALEAQRLGFKGVIVGDNRSPSSFRLHYMVAPDKVDESKVHIPSLFVSTSSYNLLWSDLLHSYRQPLKLYAKPEELGDMFWPFLLCFSPSIIMLITVQALAIRKFIRTYRTKSKTRRFIEDLPSRTISREGFYSEEEEIENSTQNGELVPLMDESTRRATFGVECVICLESFTKGDKVVALPCKHEFHRPCIAKWIVDYRHACPTCNTEVPPPKPF.

Residues 1-24 (MSYYQIIVCILASISYIILLEVIA) form the signal peptide. The region spanning 92-215 (PNRNDTDASY…SSYNLLWSDL (124 aa)) is the PA domain. A helical transmembrane segment spans residues 236–256 (FWPFLLCFSPSIIMLITVQAL). Residue Ser280 is modified to Phosphoserine. The RING-type; atypical zinc-finger motif lies at 321-363 (CVICLESFTKGDKVVALPCKHEFHRPCIAKWIVDYRHACPTCN).

Its subcellular location is the golgi apparatus membrane. It is found in the vacuole membrane. This is an uncharacterized protein from Schizosaccharomyces pombe (strain 972 / ATCC 24843) (Fission yeast).